The chain runs to 347 residues: Mediator of RNA polymerase II transcription subunit 7 (347 aa).

2 disordered regions span residues 97–172 and 302–326; these read GIER…TQTH and VPVGARTGTTVGDRRVGVDGEGAEE. Low complexity-rich tracts occupy residues 108–171 and 302–312; these read STTT…STQT and VPVGARTGTTV.

It belongs to the Mediator complex subunit 7 family. Component of the Mediator complex.

The protein resides in the nucleus. Its function is as follows. Component of the Mediator complex, a coactivator involved in the regulated transcription of nearly all RNA polymerase II-dependent genes. Mediator functions as a bridge to convey information from gene-specific regulatory proteins to the basal RNA polymerase II transcription machinery. Mediator is recruited to promoters by direct interactions with regulatory proteins and serves as a scaffold for the assembly of a functional preinitiation complex with RNA polymerase II and the general transcription factors. The polypeptide is Mediator of RNA polymerase II transcription subunit 7 (med-7) (Neurospora crassa (strain ATCC 24698 / 74-OR23-1A / CBS 708.71 / DSM 1257 / FGSC 987)).